Reading from the N-terminus, the 391-residue chain is MDQFIKQDETGDLIETGMNVANHFLSAPIQGTNLLSKATIIPGVAPVLIGNPEQKNIQYPTASHQGSKSKGRSSGAKPIIVSSSEVGTGGTQIPEPLFAQTGQGGTVTTVYQDPTIQPTGSYRSVELAKIGKERMINRFVEKPRTSTPVTEFKRGGPGAAAQGQTIQEEGIDGNGASAGSKERSGSLSGATPYAHLSLPQQDSTPANVGIAQQSAISANEIMDLLRGMDARLQHLEQKVDKVLAQGSMVTQIKNELSTVKTTLATIEGMMATVKIMDPGNPTGVPVDELRRSFSDHVTIVSGPGDVSFSSSEEPTLYLDELARPIPKPRPAKQPKPQPVKDLAGRKVMITKMITDCVANPQMKQAFEQRLAKASTEDALNDIKRDIIRSAI.

Residues Thr-10, Thr-16, and Thr-39 each carry the phosphothreonine modification. Position 69 is a phosphoserine (Ser-69). Disordered stretches follow at residues 82–101 (SSSEVGTGGTQIPEPLFAQT) and 143–208 (PRTS…PANV). 3 positions are modified to phosphothreonine: Thr-91, Thr-150, and Thr-165. A Phosphoserine modification is found at Ser-188. The segment covering 198–208 (LPQQDSTPANV) has biased composition (polar residues). The stretch at 218–245 (ANEIMDLLRGMDARLQHLEQKVDKVLAQ) forms a coiled coil. Position 250 is a phosphothreonine (Thr-250). Ser-257 is modified (phosphoserine). 2 positions are modified to phosphothreonine: Thr-258 and Thr-282. Residues Ser-292 and Ser-294 each carry the phosphoserine modification. The residue at position 298 (Thr-298) is a Phosphothreonine. 2 positions are modified to phosphoserine: Ser-301 and Ser-374. Residues 343 to 391 (AGRKVMITKMITDCVANPQMKQAFEQRLAKASTEDALNDIKRDIIRSAI) are interaction with the nucleoprotein. The tract at residues 348–391 (MITKMITDCVANPQMKQAFEQRLAKASTEDALNDIKRDIIRSAI) is x domain (XD). Thr-375 is modified (phosphothreonine).

This sequence belongs to the rubulavirus/avulavirus P protein family. Homotetramer. Interacts (via multimerization domain) with polymerase L; this interaction forms the polymerase L-P complex. Interacts (via N-terminus) with N0 (via Ncore); this interaction allows P to chaperon N0 to avoid N polymerization before encapsidation. Interacts (via C-terminus) with N-RNA template; this interaction positions the polymerase on the template for both transcription and replication. Interacts with host RPS6KB1 kinase; this interaction may play a role in the viral replication and transcription.

The protein localises to the virion. Essential cofactor of the RNA polymerase L that plays a central role in the transcription and replication by forming the polymerase complex with RNA polymerase L and recruiting L to the genomic N-RNA template for RNA synthesis. Also plays a central role in the encapsidation of nascent RNA chains by forming the encapsidation complex with the nucleocapsid protein N (N-P complex). Acts as a chaperone for newly synthesized free N protein, so-called N0, allowing encapsidation of nascent RNA chains during replication. The nucleoprotein protein N prevents excessive phosphorylation of P, which leads to down-regulation of viral transcription/ replication. Participates, together with N, in the formation of viral factories (viroplasms), which are large inclusions in the host cytoplasm where replication takes place. The chain is Phosphoprotein (V/P) from Mumps orthorubulavirus (MuV).